Reading from the N-terminus, the 1188-residue chain is DNA-directed RNA polymerase subunit beta (1188 aa).

The protein belongs to the RNA polymerase beta chain family. In terms of assembly, the RNAP catalytic core consists of 2 alpha, 1 beta, 1 beta' and 1 omega subunit. When a sigma factor is associated with the core the holoenzyme is formed, which can initiate transcription.

It catalyses the reaction RNA(n) + a ribonucleoside 5'-triphosphate = RNA(n+1) + diphosphate. Its function is as follows. DNA-dependent RNA polymerase catalyzes the transcription of DNA into RNA using the four ribonucleoside triphosphates as substrates. This Streptococcus gordonii (strain Challis / ATCC 35105 / BCRC 15272 / CH1 / DL1 / V288) protein is DNA-directed RNA polymerase subunit beta.